The primary structure comprises 132 residues: Large ribosomal subunit protein bL17 (132 aa).

This sequence belongs to the bacterial ribosomal protein bL17 family. As to quaternary structure, part of the 50S ribosomal subunit. Contacts protein L32.

In Polaromonas sp. (strain JS666 / ATCC BAA-500), this protein is Large ribosomal subunit protein bL17.